A 407-amino-acid chain; its full sequence is Imidazolonepropionase (407 aa).

H72 and H74 together coordinate Fe(3+). Residues H72 and H74 each contribute to the Zn(2+) site. Residues R81, Y144, and H177 each coordinate 4-imidazolone-5-propanoate. Residue Y144 coordinates N-formimidoyl-L-glutamate. Residue H242 coordinates Fe(3+). H242 is a Zn(2+) binding site. Q245 is a 4-imidazolone-5-propanoate binding site. D317 provides a ligand contact to Fe(3+). D317 contributes to the Zn(2+) binding site. 2 residues coordinate N-formimidoyl-L-glutamate: N319 and G321. T322 is a 4-imidazolone-5-propanoate binding site.

This sequence belongs to the metallo-dependent hydrolases superfamily. HutI family. Zn(2+) is required as a cofactor. Requires Fe(3+) as cofactor.

It localises to the cytoplasm. The catalysed reaction is 4-imidazolone-5-propanoate + H2O = N-formimidoyl-L-glutamate. It functions in the pathway amino-acid degradation; L-histidine degradation into L-glutamate; N-formimidoyl-L-glutamate from L-histidine: step 3/3. Functionally, catalyzes the hydrolytic cleavage of the carbon-nitrogen bond in imidazolone-5-propanoate to yield N-formimidoyl-L-glutamate. It is the third step in the universal histidine degradation pathway. The protein is Imidazolonepropionase of Aliivibrio salmonicida (strain LFI1238) (Vibrio salmonicida (strain LFI1238)).